The primary structure comprises 116 residues: Large ribosomal subunit protein bL19 (116 aa).

The protein belongs to the bacterial ribosomal protein bL19 family.

This protein is located at the 30S-50S ribosomal subunit interface and may play a role in the structure and function of the aminoacyl-tRNA binding site. This is Large ribosomal subunit protein bL19 from Pseudomonas savastanoi pv. phaseolicola (strain 1448A / Race 6) (Pseudomonas syringae pv. phaseolicola (strain 1448A / Race 6)).